The primary structure comprises 161 residues: Extracellular giant hemoglobin major globin subunit B1 (161 aa).

A signal peptide spans 1-16; that stretch reads MTILVLFLSCAALASA. Residues 18-161 enclose the Globin domain; the sequence is CCSRGDAEVV…YIAAGIGAGL (144 aa). A disulfide bridge links Cys-19 with Cys-149. Residue His-112 coordinates heme b.

The protein belongs to the globin family. As to quaternary structure, the 400 kDa hemoglobin consists of a spherical 24-mer arranged as a double layer of dome-shaped dodecamers. Each dodecamer is composed of the 3-fold trimer of the tetramer A1-A2-B1-B2 having one intra-tetramer (A1-B2) disulfide bond and one inter-tetramer (B1-B2) disulfide bond per tetramer.

The protein resides in the secreted. Its function is as follows. The extracellular giant hemoglobin is able to bind and transport oxygen and sulfide simultaneously and reversibly at two different sites. The sequence is that of Extracellular giant hemoglobin major globin subunit B1 (ghbB1) from Oligobrachia mashikoi (Beard worm).